The following is a 392-amino-acid chain: 3-ketoacyl-CoA thiolase (392 aa).

The active-site Acyl-thioester intermediate is Cys95. Residues His347 and Cys377 each act as proton acceptor in the active site.

It belongs to the thiolase-like superfamily. Thiolase family. As to quaternary structure, heterotetramer of two alpha chains (FadB) and two beta chains (FadA).

It localises to the cytoplasm. It carries out the reaction an acyl-CoA + acetyl-CoA = a 3-oxoacyl-CoA + CoA. Its pathway is lipid metabolism; fatty acid beta-oxidation. Functionally, catalyzes the final step of fatty acid oxidation in which acetyl-CoA is released and the CoA ester of a fatty acid two carbons shorter is formed. The protein is 3-ketoacyl-CoA thiolase of Chromohalobacter salexigens (strain ATCC BAA-138 / DSM 3043 / CIP 106854 / NCIMB 13768 / 1H11).